The primary structure comprises 143 residues: NADH-quinone oxidoreductase subunit A (143 aa).

The next 3 membrane-spanning stretches (helical) occupy residues 12 to 32 (YIVG…FLGG), 61 to 81 (FYLI…LYIW), and 90 to 110 (WIGF…LIYA).

The protein belongs to the complex I subunit 3 family. As to quaternary structure, NDH-1 is composed of 13 different subunits. Subunits NuoA, H, J, K, L, M, N constitute the membrane sector of the complex.

Its subcellular location is the cell inner membrane. The catalysed reaction is a quinone + NADH + 5 H(+)(in) = a quinol + NAD(+) + 4 H(+)(out). In terms of biological role, NDH-1 shuttles electrons from NADH, via FMN and iron-sulfur (Fe-S) centers, to quinones in the respiratory chain. The immediate electron acceptor for the enzyme in this species is believed to be ubiquinone. Couples the redox reaction to proton translocation (for every two electrons transferred, four hydrogen ions are translocated across the cytoplasmic membrane), and thus conserves the redox energy in a proton gradient. The sequence is that of NADH-quinone oxidoreductase subunit A from Blochmanniella floridana.